A 412-amino-acid chain; its full sequence is tRNA pseudouridine synthase Pus10 (412 aa).

Residues 73-197 (HEPSIKFLSN…TGSVEVQIMP (125 aa)) enclose the THUMP domain. Substrate contacts are provided by Tyr-308 and Tyr-376.

The protein belongs to the pseudouridine synthase Pus10 family.

It carries out the reaction uridine(54) in tRNA = pseudouridine(54) in tRNA. It catalyses the reaction uridine(55) in tRNA = pseudouridine(55) in tRNA. Functionally, responsible for synthesis of pseudouridine from uracil-54 and uracil-55 in the psi GC loop of transfer RNAs. This Vulcanisaeta distributa (strain DSM 14429 / JCM 11212 / NBRC 100878 / IC-017) protein is tRNA pseudouridine synthase Pus10.